We begin with the raw amino-acid sequence, 427 residues long: Trigger factor (427 aa).

One can recognise a PPIase FKBP-type domain in the interval 163 to 248; that stretch reads GDTVVIDFVG…IHEVKAKEVP (86 aa).

Belongs to the FKBP-type PPIase family. Tig subfamily.

The protein resides in the cytoplasm. The enzyme catalyses [protein]-peptidylproline (omega=180) = [protein]-peptidylproline (omega=0). Its function is as follows. Involved in protein export. Acts as a chaperone by maintaining the newly synthesized protein in an open conformation. Functions as a peptidyl-prolyl cis-trans isomerase. This Streptococcus pneumoniae (strain Taiwan19F-14) protein is Trigger factor.